Reading from the N-terminus, the 104-residue chain is Nucleoid-associated protein Dtur_0258 (104 aa).

A disordered region spans residues E84–F104.

This sequence belongs to the YbaB/EbfC family. In terms of assembly, homodimer.

It is found in the cytoplasm. It localises to the nucleoid. Functionally, binds to DNA and alters its conformation. May be involved in regulation of gene expression, nucleoid organization and DNA protection. The protein is Nucleoid-associated protein Dtur_0258 of Dictyoglomus turgidum (strain DSM 6724 / Z-1310).